The sequence spans 83 residues: Apolipoprotein C-I, basic form (83 aa).

A signal peptide spans 1–26; the sequence is MRLFLSLPVLVVVLSMVLEGPAPAQG.

The protein belongs to the apolipoprotein C1 family.

Its subcellular location is the secreted. Its function is as follows. Inhibitor of lipoprotein binding to the low density lipoprotein (LDL) receptor, LDL receptor-related protein, and very low density lipoprotein (VLDL) receptor. Associates with high density lipoproteins (HDL) and the triacylglycerol-rich lipoproteins in the plasma and makes up about 10% of the protein of the VLDL and 2% of that of HDL. Appears to interfere directly with fatty acid uptake and is also the major plasma inhibitor of cholesteryl ester transfer protein (CETP). Binds free fatty acids and reduces their intracellular esterification. Modulates the interaction of APOE with beta-migrating VLDL and inhibits binding of beta-VLDL to the LDL receptor-related protein. This is Apolipoprotein C-I, basic form (APOC1B) from Cercocebus atys (Sooty mangabey).